The primary structure comprises 940 residues: Reticulon-3 (940 aa).

Over residues 1 to 24 (MAESSAATQSPSVSSSSSGAEPST) the composition is skewed to low complexity. Disordered regions lie at residues 1–32 (MAES…GGSP), 71–91 (SSEI…LGSH), and 129–182 (DIPC…ALDL). At Ala2 the chain carries N-acetylalanine. Topologically, residues 2–771 (AESSAATQSP…KKTGFVFGTT (770 aa)) are cytoplasmic. Residue Ser31 is modified to Phosphoserine. Phosphoserine occurs at positions 196, 204, 209, 212, 249, and 282. 3 disordered regions span residues 314–335 (AKQQ…RSEH), 381–405 (KGYL…ISGS), and 428–512 (EVTE…LEGQ). Over residues 430-447 (TEVDSSGESDDTVIEDTT) the composition is skewed to acidic residues. Positions 472-490 (TSERENKETTSHETVRSEM) are enriched in basic and acidic residues. Positions 491–512 (YENSEQQQAHAETPTQRSLEGQ) are enriched in polar residues. Phosphoserine is present on Ser508. Thr572 carries the post-translational modification Phosphothreonine. Residues Ser575, Ser576, and Ser652 each carry the phosphoserine modification. 2 disordered regions span residues 623-655 (NKLS…SSDL) and 672-701 (QVQA…SDIL). Residues 689-699 (DPQSGPQNSSD) show a composition bias toward polar residues. In terms of domain architecture, Reticulon spans 752-940 (VHDLIFWRDV…LPGIAKKKAE (189 aa)). The segment at residues 772-795 (LIMLLSLAAFSVISVVSYLILALL) is an intramembrane region (helical). The Cytoplasmic portion of the chain corresponds to 796–852 (SVTISFRVYKSVIQAVQKSEEGHPFKAYLDVDITLSSEAFHSYMNAAMVHVNKALKL). An intramembrane region (helical) is located at residues 853–875 (IIRLFLVEDLVDSLKLAVFMWLM). Topologically, residues 876–879 (TYVG) are cytoplasmic. An intramembrane region (helical) is located at residues 880 to 902 (AVFNGITLLILAELLVFSVPIVY). The interaction with FADD stretch occupies residues 895-940 (VFSVPIVYEKYKTQIDHYVGIARDQTKSIVEKIQAKLPGIAKKKAE). The Cytoplasmic portion of the chain corresponds to 903–940 (EKYKTQIDHYVGIARDQTKSIVEKIQAKLPGIAKKKAE). Positions 908 to 910 (QID) are interaction with BACE1.

As to quaternary structure, homodimer. Interacts with RTN4. Isoform 2 interacts with BACE1, BACE2, BCL2 and FADD. Interacts with ATL2. Interacts with TMEM33. Interacts with ATL1. Interacts with ZFYVE27 and with KIF5A in a ZFYVE27-dependent manner. Interacts with RIGI. Interacts with TRIM25. Present in olfactory bulb, olfactory epithelium and retina (at protein level).

It localises to the endoplasmic reticulum membrane. Its subcellular location is the golgi apparatus membrane. May be involved in membrane trafficking in the early secretory pathway. Inhibits BACE1 activity and amyloid precursor protein processing. May induce caspase-8 cascade and apoptosis. May favor BCL2 translocation to the mitochondria upon endoplasmic reticulum stress. Induces the formation of endoplasmic reticulum tubules. Acts also as an inflammation-resolving regulator by interacting with both TRIM25 and RIGI, subsequently impairing RIGI 'Lys-63'-linked polyubiquitination leading to IRF3 and NF-kappa-B inhibition. The sequence is that of Reticulon-3 (Rtn3) from Rattus norvegicus (Rat).